The chain runs to 445 residues: tRNA-2-methylthio-N(6)-dimethylallyladenosine synthase (445 aa).

One can recognise an MTTase N-terminal domain in the interval 3-124 (KKLYIKTYGC…LPELISKVVR (122 aa)). Residues cysteine 12, cysteine 48, cysteine 87, cysteine 162, cysteine 166, and cysteine 169 each contribute to the [4Fe-4S] cluster site. Residues 148 to 380 (YPQGASSFIS…QQELTAQQLA (233 aa)) enclose the Radical SAM core domain. A TRAM domain is found at 383-445 (ESCVGSIMKV…ASNSLTGEVI (63 aa)).

It belongs to the methylthiotransferase family. MiaB subfamily. As to quaternary structure, monomer. [4Fe-4S] cluster is required as a cofactor.

It is found in the cytoplasm. The catalysed reaction is N(6)-dimethylallyladenosine(37) in tRNA + (sulfur carrier)-SH + AH2 + 2 S-adenosyl-L-methionine = 2-methylsulfanyl-N(6)-dimethylallyladenosine(37) in tRNA + (sulfur carrier)-H + 5'-deoxyadenosine + L-methionine + A + S-adenosyl-L-homocysteine + 2 H(+). Functionally, catalyzes the methylthiolation of N6-(dimethylallyl)adenosine (i(6)A), leading to the formation of 2-methylthio-N6-(dimethylallyl)adenosine (ms(2)i(6)A) at position 37 in tRNAs that read codons beginning with uridine. This Rickettsia felis (strain ATCC VR-1525 / URRWXCal2) (Rickettsia azadi) protein is tRNA-2-methylthio-N(6)-dimethylallyladenosine synthase.